Here is a 358-residue protein sequence, read N- to C-terminus: DNA polymerase IV (358 aa).

One can recognise a UmuC domain in the interval isoleucine 4 to glycine 185. Residues aspartate 8 and aspartate 103 each coordinate Mg(2+). The active site involves glutamate 104.

The protein belongs to the DNA polymerase type-Y family. As to quaternary structure, monomer. The cofactor is Mg(2+).

It is found in the cytoplasm. The enzyme catalyses DNA(n) + a 2'-deoxyribonucleoside 5'-triphosphate = DNA(n+1) + diphosphate. Functionally, poorly processive, error-prone DNA polymerase involved in untargeted mutagenesis. Copies undamaged DNA at stalled replication forks, which arise in vivo from mismatched or misaligned primer ends. These misaligned primers can be extended by PolIV. Exhibits no 3'-5' exonuclease (proofreading) activity. May be involved in translesional synthesis, in conjunction with the beta clamp from PolIII. In Shewanella pealeana (strain ATCC 700345 / ANG-SQ1), this protein is DNA polymerase IV.